A 260-amino-acid polypeptide reads, in one-letter code: MALDGDKSLCTSSTQPLIPVAHIRPLPAGVQTVSPRPEEPSITRPPPSFQASVNRESGARVVVPIAPTYRSPGPSPYSPPPAAPEAKHVEEPPTARPAMEPRNVSSLPGASGPSDLHPYPVPKVAPKPSRSGWTRLKKQLMEEAKEPAFPELKPNLEPMQPEVPAPVVGLQPPASRASRMWDAVLYRMSLAESHRDHPVGPGDRGHPLACLNRLPFLCRPRFNARKLQEVVRPPPTFHPILELHSRPKNFNRTAEGWRLQ.

The interval 29–132 is disordered; the sequence is GVQTVSPRPE…KVAPKPSRSG (104 aa). Residues 73–83 show a composition bias toward pro residues; the sequence is GPSPYSPPPAA.

The sequence is that of Proline-rich protein 33 (Prr33) from Mus musculus (Mouse).